A 367-amino-acid polypeptide reads, in one-letter code: Germination protease (367 aa).

Residues 1-15 (MKEPLDLSKYSVRTD) constitute a propeptide that is removed on maturation.

Belongs to the peptidase A25 family. As to quaternary structure, homotetramer. Post-translationally, autoproteolytically processed. The inactive tetrameric zymogen termed p46 autoprocesses to a smaller form termed p41, which is active only during spore germination.

It catalyses the reaction Endopeptidase action with P4 Glu or Asp, P1 preferably Glu &gt; Asp, P1' hydrophobic and P2' Ala.. Initiates the rapid degradation of small, acid-soluble proteins during spore germination. In Bacillus mycoides (strain KBAB4) (Bacillus weihenstephanensis), this protein is Germination protease.